The chain runs to 109 residues: Photosystem II reaction center Psb28 protein (109 aa).

Belongs to the Psb28 family. In terms of assembly, part of the photosystem II complex.

The protein localises to the plastid. It is found in the chloroplast thylakoid membrane. This is Photosystem II reaction center Psb28 protein from Cyanidioschyzon merolae (strain NIES-3377 / 10D) (Unicellular red alga).